A 419-amino-acid chain; its full sequence is Transcription termination factor Rho (419 aa).

Positions 48–123 (EISGDGVLEI…LKVDSINFDR (76 aa)) constitute a Rho RNA-BD domain. 3 RNA-binding regions span residues 61–66 (GFGFLR), 78–80 (DIY), and 108–110 (ERY). Residues 169-174 (GKGQRG), 181-186 (KAGKTI), and arginine 212 contribute to the ATP site. The interval 284–288 (VLTGG) is RNA-binding 2.

Belongs to the Rho family. Homohexamer. The homohexamer assembles into an open ring structure.

Its function is as follows. Facilitates transcription termination by a mechanism that involves Rho binding to the nascent RNA, activation of Rho's RNA-dependent ATPase activity, and release of the mRNA from the DNA template. The sequence is that of Transcription termination factor Rho from Pseudomonas aeruginosa (strain ATCC 15692 / DSM 22644 / CIP 104116 / JCM 14847 / LMG 12228 / 1C / PRS 101 / PAO1).